The following is a 161-amino-acid chain: Troponin C, slow skeletal and cardiac muscles (161 aa).

Methionine 1 is subject to N-acetylmethionine. EF-hand domains are found at residues 16 to 51, 52 to 87, 92 to 127, and 128 to 161; these read QKNEFKAAFDIFVLGAEDGCISTKELGKVMRMLGQN, PTPEELQEMIDEVDEDGSGTVDFDQFLVMMVRCMKD, KTEEELSDLFRMFDKNADGYIDLEELKIMLQATGET, and ITEDDIEELMKDGNKNNDGRIDYDEFLQFMKGVE. Aspartate 65, aspartate 67, serine 69, threonine 71, aspartate 105, asparagine 107, aspartate 109, tyrosine 111, glutamate 116, asparagine 143, aspartate 145, arginine 147, and glutamate 152 together coordinate Ca(2+).

This sequence belongs to the troponin C family.

Its function is as follows. Troponin is the central regulatory protein of striated muscle contraction. Tn consists of three components: Tn-I which is the inhibitor of actomyosin ATPase, Tn-T which contains the binding site for tropomyosin and Tn-C. The binding of calcium to Tn-C abolishes the inhibitory action of Tn on actin filaments. In Coturnix japonica (Japanese quail), this protein is Troponin C, slow skeletal and cardiac muscles (TNNC1).